Consider the following 482-residue polypeptide: ATP synthase subunit beta (482 aa).

Residue 161 to 168 (GGAGVGKT) coordinates ATP.

Belongs to the ATPase alpha/beta chains family. In terms of assembly, F-type ATPases have 2 components, CF(1) - the catalytic core - and CF(0) - the membrane proton channel. CF(1) has five subunits: alpha(3), beta(3), gamma(1), delta(1), epsilon(1). CF(0) has three main subunits: a(1), b(2) and c(9-12). The alpha and beta chains form an alternating ring which encloses part of the gamma chain. CF(1) is attached to CF(0) by a central stalk formed by the gamma and epsilon chains, while a peripheral stalk is formed by the delta and b chains.

It is found in the cell inner membrane. The catalysed reaction is ATP + H2O + 4 H(+)(in) = ADP + phosphate + 5 H(+)(out). Produces ATP from ADP in the presence of a proton gradient across the membrane. The catalytic sites are hosted primarily by the beta subunits. This Solibacter usitatus (strain Ellin6076) protein is ATP synthase subunit beta.